We begin with the raw amino-acid sequence, 125 residues long: Large ribosomal subunit protein bL12 (125 aa).

Belongs to the bacterial ribosomal protein bL12 family. Homodimer. Part of the ribosomal stalk of the 50S ribosomal subunit. Forms a multimeric L10(L12)X complex, where L10 forms an elongated spine to which 2 to 4 L12 dimers bind in a sequential fashion. Binds GTP-bound translation factors.

Its function is as follows. Forms part of the ribosomal stalk which helps the ribosome interact with GTP-bound translation factors. Is thus essential for accurate translation. In Chlorobium phaeobacteroides (strain DSM 266 / SMG 266 / 2430), this protein is Large ribosomal subunit protein bL12.